Consider the following 109-residue polypeptide: Nucleoid-associated protein LGAS_0369 (109 aa).

Belongs to the YbaB/EbfC family. In terms of assembly, homodimer.

The protein localises to the cytoplasm. It is found in the nucleoid. Functionally, binds to DNA and alters its conformation. May be involved in regulation of gene expression, nucleoid organization and DNA protection. The sequence is that of Nucleoid-associated protein LGAS_0369 from Lactobacillus gasseri (strain ATCC 33323 / DSM 20243 / BCRC 14619 / CIP 102991 / JCM 1131 / KCTC 3163 / NCIMB 11718 / NCTC 13722 / AM63).